Reading from the N-terminus, the 158-residue chain is NADH-quinone oxidoreductase subunit B 1 (158 aa).

[4Fe-4S] cluster-binding residues include Cys37, Cys38, Cys102, and Cys132.

It belongs to the complex I 20 kDa subunit family. As to quaternary structure, NDH-1 is composed of 14 different subunits. Subunits NuoB, C, D, E, F, and G constitute the peripheral sector of the complex. [4Fe-4S] cluster is required as a cofactor.

The protein resides in the cell inner membrane. The enzyme catalyses a quinone + NADH + 5 H(+)(in) = a quinol + NAD(+) + 4 H(+)(out). NDH-1 shuttles electrons from NADH, via FMN and iron-sulfur (Fe-S) centers, to quinones in the respiratory chain. Couples the redox reaction to proton translocation (for every two electrons transferred, four hydrogen ions are translocated across the cytoplasmic membrane), and thus conserves the redox energy in a proton gradient. The sequence is that of NADH-quinone oxidoreductase subunit B 1 from Azoarcus sp. (strain BH72).